The chain runs to 387 residues: Succinate--CoA ligase [ADP-forming] subunit beta (387 aa).

The region spanning 9 to 245 is the ATP-grasp domain; sequence KDLLESYGLK…KSQENAKELK (237 aa). ATP is bound by residues lysine 46, 53-55, glutamate 100, tyrosine 103, and glutamate 108; that span reads GRG. The Mg(2+) site is built by asparagine 200 and aspartate 214. Substrate-binding positions include asparagine 265 and 322–324; that span reads GIV.

It belongs to the succinate/malate CoA ligase beta subunit family. In terms of assembly, heterotetramer of two alpha and two beta subunits. Mg(2+) is required as a cofactor.

The catalysed reaction is succinate + ATP + CoA = succinyl-CoA + ADP + phosphate. It carries out the reaction GTP + succinate + CoA = succinyl-CoA + GDP + phosphate. The protein operates within carbohydrate metabolism; tricarboxylic acid cycle; succinate from succinyl-CoA (ligase route): step 1/1. Its function is as follows. Succinyl-CoA synthetase functions in the citric acid cycle (TCA), coupling the hydrolysis of succinyl-CoA to the synthesis of either ATP or GTP and thus represents the only step of substrate-level phosphorylation in the TCA. The beta subunit provides nucleotide specificity of the enzyme and binds the substrate succinate, while the binding sites for coenzyme A and phosphate are found in the alpha subunit. The polypeptide is Succinate--CoA ligase [ADP-forming] subunit beta (Francisella tularensis subsp. tularensis (strain WY96-3418)).